Consider the following 252-residue polypeptide: Phosphoglycolate phosphatase (252 aa).

Residue aspartate 13 is the Nucleophile of the active site. Mg(2+)-binding residues include aspartate 13, aspartate 15, and aspartate 192.

The protein belongs to the HAD-like hydrolase superfamily. CbbY/CbbZ/Gph/YieH family. As to quaternary structure, monomer. The cofactor is Mg(2+). Requires chloride as cofactor.

It catalyses the reaction 2-phosphoglycolate + H2O = glycolate + phosphate. The protein operates within organic acid metabolism; glycolate biosynthesis; glycolate from 2-phosphoglycolate: step 1/1. Specifically catalyzes the dephosphorylation of 2-phosphoglycolate. Is involved in the dissimilation of the intracellular 2-phosphoglycolate formed during the DNA repair of 3'-phosphoglycolate ends, a major class of DNA lesions induced by oxidative stress. The chain is Phosphoglycolate phosphatase from Salmonella paratyphi A (strain ATCC 9150 / SARB42).